Reading from the N-terminus, the 251-residue chain is 5'-nucleotidase SurE (251 aa).

4 residues coordinate a divalent metal cation: aspartate 8, aspartate 9, serine 42, and asparagine 94.

Belongs to the SurE nucleotidase family. Requires a divalent metal cation as cofactor.

It is found in the cytoplasm. The catalysed reaction is a ribonucleoside 5'-phosphate + H2O = a ribonucleoside + phosphate. Functionally, nucleotidase that shows phosphatase activity on nucleoside 5'-monophosphates. This chain is 5'-nucleotidase SurE, found in Hydrogenovibrio crunogenus (strain DSM 25203 / XCL-2) (Thiomicrospira crunogena).